Here is a 320-residue protein sequence, read N- to C-terminus: 1-aminocyclopropane-1-carboxylate oxidase 3 (320 aa).

Residues 111 to 131 (NEYRLAMKDFGKRLEILAEEL) adopt a coiled-coil conformation. The region spanning 155-256 (GPTFATKLSN…RMSIASFYNP (102 aa)) is the Fe2OG dioxygenase domain. Fe cation-binding residues include histidine 180, aspartate 182, and histidine 237. Arginine 247 lines the 2-oxoglutarate pocket.

It belongs to the iron/ascorbate-dependent oxidoreductase family. Requires Fe(2+) as cofactor.

The catalysed reaction is 1-aminocyclopropane-1-carboxylate + L-ascorbate + O2 = ethene + L-dehydroascorbate + hydrogen cyanide + CO2 + 2 H2O. Its pathway is alkene biosynthesis; ethylene biosynthesis via S-adenosyl-L-methionine; ethylene from S-adenosyl-L-methionine: step 2/2. Functionally, enzyme involved in the ethylene biosynthesis. May promote stem elongation by maximizing the extensibility cells, possibly by activating ethylene biosynthesis, in response to very-long-chain fatty acids (VLCFAs C20:0 to C30:0). This chain is 1-aminocyclopropane-1-carboxylate oxidase 3, found in Arabidopsis thaliana (Mouse-ear cress).